The following is a 189-amino-acid chain: 3-hydroxyanthranilate 3,4-dioxygenase (189 aa).

Arg50 is an O2 binding site. Residues His54, Glu60, and His102 each coordinate Fe cation. Glu60 contributes to the substrate binding site. Residues Arg106 and Glu116 each coordinate substrate. Cys131, Cys136, Cys170, and Cys173 together coordinate a divalent metal cation.

Belongs to the 3-HAO family. The cofactor is Fe(2+).

The protein localises to the cytoplasm. It catalyses the reaction 3-hydroxyanthranilate + O2 = (2Z,4Z)-2-amino-3-carboxymuconate 6-semialdehyde. It participates in cofactor biosynthesis; NAD(+) biosynthesis; quinolinate from L-kynurenine: step 3/3. Its function is as follows. Catalyzes the oxidative ring opening of 3-hydroxyanthranilate to 2-amino-3-carboxymuconate semialdehyde, which spontaneously cyclizes to quinolinate. The polypeptide is 3-hydroxyanthranilate 3,4-dioxygenase (bna1) (Aspergillus niger (strain ATCC MYA-4892 / CBS 513.88 / FGSC A1513)).